We begin with the raw amino-acid sequence, 966 residues long: Phosphoenolpyruvate carboxylase, housekeeping isozyme (966 aa).

Position 11 is a phosphoserine (Ser-11). Catalysis depends on residues His-172 and Lys-601.

It belongs to the PEPCase type 1 family. As to quaternary structure, homotetramer. It depends on Mg(2+) as a cofactor.

The protein resides in the cytoplasm. The enzyme catalyses oxaloacetate + phosphate = phosphoenolpyruvate + hydrogencarbonate. With respect to regulation, by light-reversible phosphorylation. Its function is as follows. Through the carboxylation of phosphoenolpyruvate (PEP) it forms oxaloacetate, a four-carbon dicarboxylic acid source for the tricarboxylic acid cycle. This Saccharum hybrid (Sugarcane) protein is Phosphoenolpyruvate carboxylase, housekeeping isozyme.